A 748-amino-acid chain; its full sequence is Phosphoenolpyruvate-dependent phosphotransferase system (748 aa).

Residues 1–127 (MLTRLREIVE…RRQLLGVLVV (127 aa)) form the GAF domain. Residues 128 to 170 (QQRELRQYDESEESFLVTLATQMAAILSQSQVTALFGQYRQTR) form a linker region. The interval 171–748 (IRALPAAPGV…GMGGLIRGGL (578 aa)) is PTS EI. Residue histidine 356 is the Tele-phosphohistidine intermediate of the active site. Residues arginine 462 and arginine 498 each coordinate phosphoenolpyruvate. Glutamate 597 and aspartate 621 together coordinate Mg(2+). Residues 620–621 (ND) and arginine 631 contribute to the phosphoenolpyruvate site. Cysteine 668 serves as the catalytic Proton donor.

Belongs to the PEP-utilizing enzyme family. Mg(2+) serves as cofactor.

The protein localises to the cytoplasm. The enzyme catalyses L-histidyl-[protein] + phosphoenolpyruvate = N(pros)-phospho-L-histidyl-[protein] + pyruvate. In terms of biological role, component of the phosphoenolpyruvate-dependent nitrogen-metabolic phosphotransferase system (nitrogen-metabolic PTS), that seems to be involved in regulating nitrogen metabolism. Enzyme I-Ntr transfers the phosphoryl group from phosphoenolpyruvate (PEP) to the phosphoryl carrier protein (NPr). Could function in the transcriptional regulation of sigma-54 dependent operons in conjunction with the NPr (PtsO) and EIIA-Ntr (PtsN) proteins. Enzyme I-Ntr is specific for NPr. The protein is Phosphoenolpyruvate-dependent phosphotransferase system (ptsP) of Salmonella typhimurium (strain LT2 / SGSC1412 / ATCC 700720).